Consider the following 137-residue polypeptide: Succinate dehydrogenase cytochrome b560 subunit (137 aa).

A run of 2 helical transmembrane segments spans residues 31 to 51 and 60 to 80; these read AFLATMVLFSILFFKIGDLSL and FFFLTFYLNWFIISLVNFTLL. Residue His85 coordinates heme. A helical transmembrane segment spans residues 106-126; sequence VYTSGIIMLFCAAFLALLNII.

This sequence belongs to the cytochrome b560 family. As to quaternary structure, forms part of complex II containing four subunits: a 70 kDa flavoprotein (FP), a 27 kDa iron-sulfur protein (IP), a cytochrome B and a membrane-anchoring protein. The cofactor is heme.

The protein resides in the mitochondrion inner membrane. The protein operates within carbohydrate metabolism; tricarboxylic acid cycle. Functionally, membrane-anchoring subunit of succinate dehydrogenase (SDH) that is involved in complex II of the mitochondrial electron transport chain and is responsible for transferring electrons from succinate to ubiquinone (coenzyme Q). This is Succinate dehydrogenase cytochrome b560 subunit (SDH3) from Marchantia polymorpha (Common liverwort).